Reading from the N-terminus, the 398-residue chain is Acetate kinase (398 aa).

Mg(2+) is bound at residue asparagine 7. Residue lysine 14 participates in ATP binding. Arginine 91 contacts substrate. Aspartate 148 (proton donor/acceptor) is an active-site residue. ATP contacts are provided by residues 208–212 (HLGNG), 283–285 (DFR), and 331–335 (GIGEH). Residue glutamate 386 participates in Mg(2+) binding.

The protein belongs to the acetokinase family. Homodimer. The cofactor is Mg(2+). It depends on Mn(2+) as a cofactor.

The protein resides in the cytoplasm. The catalysed reaction is acetate + ATP = acetyl phosphate + ADP. It functions in the pathway metabolic intermediate biosynthesis; acetyl-CoA biosynthesis; acetyl-CoA from acetate: step 1/2. Catalyzes the formation of acetyl phosphate from acetate and ATP. Can also catalyze the reverse reaction. In Clostridium botulinum (strain Alaska E43 / Type E3), this protein is Acetate kinase.